Here is a 48-residue protein sequence, read N- to C-terminus: Large ribosomal subunit protein bL34 (48 aa).

This sequence belongs to the bacterial ribosomal protein bL34 family.

The polypeptide is Large ribosomal subunit protein bL34 (rpmH) (Mycoplasma pneumoniae (strain ATCC 29342 / M129 / Subtype 1) (Mycoplasmoides pneumoniae)).